The chain runs to 877 residues: SRP-independent targeting protein 1 (877 aa).

S309, S310, S311, S332, and S334 each carry phosphoserine. Disordered regions lie at residues 369–414 (LRKQ…PSND), 446–521 (DDYT…DVLS), and 550–579 (KPFNQKFPNSQQPDSAGASSPKRSTSSNHF). Residues 389–402 (RSQSYSSSNMSRSP) are compositionally biased toward low complexity. Positions 412–441 (SNDELVYDELNNQINEVQDRAKNEEIVLYN) form a coiled coil. Basic and acidic residues predominate over residues 447–462 (DYTKERGEQEQDRTSY). Positions 470 to 501 (YDDEEGGNEDNYDDDEDDDDDDDDDDESDDEG) are enriched in acidic residues. Polar residues-rich tracts occupy residues 510–521 (LSRSGSSTDVLS) and 551–579 (PFNQKFPNSQQPDSAGASSPKRSTSSNHF). Residues K668 and K670 each participate in a glycyl lysine isopeptide (Lys-Gly) (interchain with G-Cter in ubiquitin) cross-link. Phosphoserine is present on residues S692, S694, and S706. Positions 773 to 815 (SLPKEREDDNDSTNSTIVPNHPDNDNYNDNDNDNNTGINSNNF) are disordered. Residues 805-815 (DNNTGINSNNF) show a composition bias toward low complexity. S841 carries the phosphoserine modification.

As to quaternary structure, interacts with ENV10/SND2.

Its subcellular location is the cytoplasm. Functions in the SND pathway, a SRP (signal recognition particle) and GET (guided entry of tail-anchored proteins) independent pathway for targeting a broad range of substrate proteins to the endoplasmic reticulum. SND functions in parallel to GET in targeting proteins with downstream hydrophobic motifs. In Saccharomyces cerevisiae (strain ATCC 204508 / S288c) (Baker's yeast), this protein is SRP-independent targeting protein 1.